The sequence spans 422 residues: UDP-N-acetylglucosamine 1-carboxyvinyltransferase (422 aa).

22–23 (KN) lines the phosphoenolpyruvate pocket. Residue R94 coordinates UDP-N-acetyl-alpha-D-glucosamine. The active-site Proton donor is the C118. A 2-(S-cysteinyl)pyruvic acid O-phosphothioketal modification is found at C118. UDP-N-acetyl-alpha-D-glucosamine is bound by residues 123–127 (RPIDL), D309, and L331.

The protein belongs to the EPSP synthase family. MurA subfamily.

It localises to the cytoplasm. The enzyme catalyses phosphoenolpyruvate + UDP-N-acetyl-alpha-D-glucosamine = UDP-N-acetyl-3-O-(1-carboxyvinyl)-alpha-D-glucosamine + phosphate. It participates in cell wall biogenesis; peptidoglycan biosynthesis. Cell wall formation. Adds enolpyruvyl to UDP-N-acetylglucosamine. The sequence is that of UDP-N-acetylglucosamine 1-carboxyvinyltransferase from Sulfurimonas denitrificans (strain ATCC 33889 / DSM 1251) (Thiomicrospira denitrificans (strain ATCC 33889 / DSM 1251)).